Consider the following 1170-residue polypeptide: MLMSLTDSKEGKNRSGVRMFKDDDFLIPASGESWDRLRLTCSQPFTRHQSFGLAFLRVRSSLDSLSDPVKDPSSPGSSGLNQNSSDKLESDPSPWLTNPSIRRTFFPDPQTSTKEISALKGMLKQLQPGPLGRAARMVLSAAHKAPPASVVSPNNSHGEPDSSHPERAEPRAEEPNRKNNASRGKRRKVQEQRRPLSSSSSQPNRRATGRTKQRQQRPQAKSDGSGVQATGQCPICTGSFSIEALPRHAATCGESSPPQPASPTSLSSSESVLRCLHVALTPVPLIPKPNWTEIVNKKLKFPPTLLRAIQEGQLGLVQQLLESGSDPSGAGPGGPLRNVEESEDRSWREALNLAIRLGHEVITDVLLANVKFDFRQIHEALLVAVDTNQPAVVRRLLARLEREKGRKVDTKSFSLAFFDSSIDGSRFAPGVTPLTLACQKDLYEIAQLLMDQGHTIARPHPVSCACLECSNARRYDLLKFSLSRINTYRGIASRAHLSLASEDAMLAAFQLSRELRRLARKEPEFKPQYIALESLCQDYGFELLGMCRNQSEVTAVLNDLGEDSETEPEAEGLGQAFEEGIPNLARLRLAVNYNQKQFVAHPICQQVLSSIWCGNLAGWRGSTTIWKLFVAFLIFLTMPFLCIGYWLAPKSRLGRLLKIPVLKFLLHSASYLWFLIFLLGESLVMETQLSTFKGRSQSVWETSLHMIWVTGFLWFECKEVWIEGLRSYLLDWWNFLDVVILSLYLASFALRLLLAGLAYMHCRDASDSSTCRYFTTAERSEWRTEDPQFLAEVLFAVTSMLSFTRLAYILPAHESLGTLQISIGKMIDDMIRFMFILMIILTAFLCGLNNIYVPYQETEKLGNFNETFQFLFWTMFGMEEHSVVDMPQFLVPEFVGRAMYGIFTIVMVIVLLNMLIAMITNSFQKIEDDADVEWKFARSKLYLSYFREGLTLPVPFNILPSPKAAFYLLRRIFRFICCGSSCCKAKKSDYPPIPTFTNPGARAGPGEGEHVSYRLRVIKALVQRYIETARREFEETRRKDLGNRLTELTKTVSRLQSEVASVQKTVAAGGALRPPDGASILSRYITRVRNSFQNLGPPAPDTPAELTMPGIVETEVSLEDSLDATGEAGTPASGESSSSSSAHVLVHREQEAEGAGDLPLGEDLETKGES.

Topologically, residues 1-627 (MLMSLTDSKE…GWRGSTTIWK (627 aa)) are cytoplasmic. Disordered regions lie at residues 64–113 (SLSD…QTST), 142–231 (AHKA…QATG), and 322–342 (ESGS…VEES). The segment covering 74-85 (SPGSSGLNQNSS) has biased composition (polar residues). Over residues 158 to 177 (GEPDSSHPERAEPRAEEPNR) the composition is skewed to basic and acidic residues. ANK repeat units follow at residues 300 to 329 (KFPP…DPSG), 346 to 376 (SWRE…DFRQ), 377 to 405 (IHEA…REKG), and 429 to 458 (PGVT…TIAR). The chain crosses the membrane as a helical span at residues 628–648 (LFVAFLIFLTMPFLCIGYWLA). The Extracellular segment spans residues 649 to 658 (PKSRLGRLLK). A helical membrane pass occupies residues 659–679 (IPVLKFLLHSASYLWFLIFLL). Over 680-701 (GESLVMETQLSTFKGRSQSVWE) the chain is Cytoplasmic. Residues 702–722 (TSLHMIWVTGFLWFECKEVWI) form a helical membrane-spanning segment. Residues 723 to 737 (EGLRSYLLDWWNFLD) are Extracellular-facing. A helical transmembrane segment spans residues 738 to 758 (VVILSLYLASFALRLLLAGLA). The Cytoplasmic segment spans residues 759-788 (YMHCRDASDSSTCRYFTTAERSEWRTEDPQ). The helical transmembrane segment at 789–809 (FLAEVLFAVTSMLSFTRLAYI) threads the bilayer. At 810 to 832 (LPAHESLGTLQISIGKMIDDMIR) the chain is on the extracellular side. The chain crosses the membrane as a helical span at residues 833–853 (FMFILMIILTAFLCGLNNIYV). Topologically, residues 854-898 (PYQETEKLGNFNETFQFLFWTMFGMEEHSVVDMPQFLVPEFVGRA) are cytoplasmic. Residues 899 to 919 (MYGIFTIVMVIVLLNMLIAMI) traverse the membrane as a helical segment. At 920-1170 (TNSFQKIEDD…GEDLETKGES (251 aa)) the chain is on the extracellular side. Residues 1030–1068 (RREFEETRRKDLGNRLTELTKTVSRLQSEVASVQKTVAA) adopt a coiled-coil conformation. The segment at 1118 to 1170 (LEDSLDATGEAGTPASGESSSSSSAHVLVHREQEAEGAGDLPLGEDLETKGES) is disordered.

The protein belongs to the transient receptor (TC 1.A.4) family. STrpC subfamily. TRPC2 sub-subfamily. In terms of tissue distribution, expressed exclusively in vomeronasal organ neurons (sensory microvilli).

It is found in the membrane. Its function is as follows. Thought to form a receptor-activated calcium permeant cation channel. Probably is operated by a phosphatidylinositol second messenger system activated by receptor tyrosine kinases or G-protein coupled receptors. Is not activated by intracellular calcium store depletion. This Rattus norvegicus (Rat) protein is Short transient receptor potential channel 2 (Trpc2).